Here is a 223-residue protein sequence, read N- to C-terminus: NAD(P)H-hydrate epimerase (223 aa).

The YjeF N-terminal domain maps to 9–209; that stretch reads MQKIDTYTVN…DIGLLTPPDF (201 aa). 57–61 contributes to the (6S)-NADPHX binding site; it reads NNGAD. 2 residues coordinate K(+): N58 and D119. (6S)-NADPHX-binding positions include 123–129 and D152; that span reads GTGLNNL. T155 provides a ligand contact to K(+).

Belongs to the NnrE/AIBP family. K(+) is required as a cofactor.

It carries out the reaction (6R)-NADHX = (6S)-NADHX. It catalyses the reaction (6R)-NADPHX = (6S)-NADPHX. Its function is as follows. Catalyzes the epimerization of the S- and R-forms of NAD(P)HX, a damaged form of NAD(P)H that is a result of enzymatic or heat-dependent hydration. This is a prerequisite for the S-specific NAD(P)H-hydrate dehydratase to allow the repair of both epimers of NAD(P)HX. This is NAD(P)H-hydrate epimerase from Leuconostoc gelidum subsp. gasicomitatum (strain DSM 15947 / CCUG 46042 / CECT 5767 / JCM 12535 / LMG 18811 / NBRC 113245 / TB1-10) (Leuconostoc gasicomitatum).